The primary structure comprises 715 residues: MADAQDTYSYDAPSIFNFSSFHDDHNADSWFDQLTNAENIPPDQKPLSETSVNAEQNCKVEPGKITPSKEEVSKSTTHVCDVKSQTKRSARRMSKKHRQKILLKMKETHLEKETAQSEYPPCKKLKGSSTKDRQAPVIRGQPTSSHHGTTSPKPKAQLTMPATPTVLKRRNILAKSKSSEEQELEKMQALQKEMLENLKKNEHSMKVAISGAGQPVKNFIPVTKPVDFHFKTDDRLKRNANPPEGDGYKEVDFASVLRKPPTSPVQVTKGGHTVPKPFNLSKGKRKHEEASDFVSTAEQVVAFYRRTPARYHLRSRQKEMEGPSPVKMLKPKLTNPKTPLLQTKQRHRPTTCKSAAELEAEELDMIHQYKFKAQELDTRILEGGPVLPKKPSVKEPTKAIGFDLEIEKRIQQREKKDEVEEEAFSFHSRPCPSKILADVVGVPQKKLLPVTVPQSPAFALKNRVRIPAQEEKEEEVPVIKATRMPHYGVPFKPKLVEQKQVEACPFSFCERDKERQLQKEKRLDELRKEEVPKFKAQRLPQFDHISLPEKKVKMPTQQEPFQLEIDKRGATKLQRWQHQIKEELKQQKEMVVFKARPNTVVHQEPFVPKKESRSLTDSLSGSMIQEGFELATAKRAKERQEFEKCLAEMEAQKSLLEEETRKQREEEEREEINQLRQELVHKAQPIRKFKAVEVKASDVPLTVPASPNFSDRFKC.

Positions N36–L167 are disordered. The segment covering L47–Q56 has biased composition (polar residues). Positions Q85–L103 are enriched in basic residues. The segment covering K104–A115 has biased composition (basic and acidic residues). Over residues Q141–P152 the composition is skewed to polar residues. Residue S204 is modified to Phosphoserine; by plk1. Disordered stretches follow at residues P260–S291 and R314–K337.

The protein belongs to the TPX2 family. Associates with microtubules. Interacts with aurka and plk1. Interacts with kif15. Post-translationally, phosphorylated during mitosis. Hyperphosphorylated upon assembly of microtubules.

The protein localises to the nucleus. It localises to the cytoplasm. The protein resides in the cytoskeleton. It is found in the spindle. Its subcellular location is the spindle pole. Functionally, spindle assembly factor. Required for normal assembly of mitotic spindles. Mediates the binding kif15 and aurka to spindle microtubules. Required for targeting kif15 to microtubule minus ends. Activates aurka by promoting its autophosphorylation and protects the phosphorylated residue against dephosphorylation. In Xenopus laevis (African clawed frog), this protein is Targeting protein for Xklp2-B (tpx2-b).